We begin with the raw amino-acid sequence, 426 residues long: Serine--tRNA ligase (426 aa).

L-serine is bound at residue 233-235 (TAE). 264-266 (RRE) provides a ligand contact to ATP. Glu-287 lines the L-serine pocket. 351-354 (EISS) contributes to the ATP binding site. Residue Ser-386 coordinates L-serine.

This sequence belongs to the class-II aminoacyl-tRNA synthetase family. Type-1 seryl-tRNA synthetase subfamily. As to quaternary structure, homodimer. The tRNA molecule binds across the dimer.

It localises to the cytoplasm. It carries out the reaction tRNA(Ser) + L-serine + ATP = L-seryl-tRNA(Ser) + AMP + diphosphate + H(+). The enzyme catalyses tRNA(Sec) + L-serine + ATP = L-seryl-tRNA(Sec) + AMP + diphosphate + H(+). It functions in the pathway aminoacyl-tRNA biosynthesis; selenocysteinyl-tRNA(Sec) biosynthesis; L-seryl-tRNA(Sec) from L-serine and tRNA(Sec): step 1/1. Catalyzes the attachment of serine to tRNA(Ser). Is also able to aminoacylate tRNA(Sec) with serine, to form the misacylated tRNA L-seryl-tRNA(Sec), which will be further converted into selenocysteinyl-tRNA(Sec). In Thermosipho africanus (strain TCF52B), this protein is Serine--tRNA ligase.